Reading from the N-terminus, the 622-residue chain is Auxin efflux carrier component 1 (622 aa).

Residues 1–6 lie on the Extracellular side of the membrane; it reads MITAAD. A helical transmembrane segment spans residues 7 to 27; that stretch reads FYHVMTAMVPLYVAMILAYGS. Residues 28–44 lie on the Cytoplasmic side of the membrane; it reads VKWWKIFTPDQCSGINR. A helical membrane pass occupies residues 45–65; the sequence is FVALFAVPLLSFHFIAANNPY. Valine 51 lines the (indol-3-yl)acetate pocket. At 66-70 the chain is on the extracellular side; that stretch reads AMNLR. A helical membrane pass occupies residues 71–91; the sequence is FLAADSLQKVIVLSLLFLWCK. The Cytoplasmic segment spans residues 92 to 100; it reads LSRNGSLDW. The helical transmembrane segment at 101 to 121 threads the bilayer; sequence TITLFSLSTLPNTLVMGIPLL. The (indol-3-yl)acetate site is built by asparagine 112 and leucine 114. The Extracellular portion of the chain corresponds to 122 to 131; it reads KGMYGNFSGD. Asparagine 127 is a glycosylation site (N-linked (GlcNAc...) asparagine). The helical transmembrane segment at 132 to 152 threads the bilayer; that stretch reads LMVQIVVLQCIIWYTLMLFLF. Tyrosine 145 serves as a coordination point for (indol-3-yl)acetate. The Cytoplasmic portion of the chain corresponds to 153-482; the sequence is EYRGAKLLIS…LIRNPNSYSS (330 aa). A phosphoserine mark is found at serine 209, serine 212, serine 221, and serine 225. The disordered stretch occupies residues 213-233; that stretch reads RSDIYSRRSQGLSATPRPSNL. At threonine 227 the chain carries Phosphothreonine. Serine 231 carries the post-translational modification Phosphoserine. Threonine 248 bears the Phosphothreonine mark. Phosphoserine is present on residues serine 252, serine 253, and serine 271. The interval 268–362 is disordered; it reads GRNSNFGPGE…PVVGGKRQDG (95 aa). Threonine 286 carries the post-translational modification Phosphothreonine. Phosphoserine is present on serine 290. The segment covering 298-311 has biased composition (low complexity); the sequence is PAKPTAAGTAAGAG. The residue at position 302 (threonine 302) is a Phosphothreonine. Phosphoserine is present on residues serine 317, serine 320, and serine 337. The residue at position 340 (threonine 340) is a Phosphothreonine. Phosphoserine occurs at positions 374, 377, 408, 414, 426, 434, and 446. A helical membrane pass occupies residues 483–503; the sequence is LFGITWSLISFKWNIEMPALI. The Extracellular portion of the chain corresponds to 504 to 506; it reads AKS. Residues 507 to 527 form a helical membrane-spanning segment; sequence ISILSDAGLGMAMFSLGLFMA. The Cytoplasmic portion of the chain corresponds to 528 to 541; that stretch reads LNPRIIACGNRRAA. The helical transmembrane segment at 542 to 562 threads the bilayer; that stretch reads FAAAMRFVVGPAVMLVASYAV. The Extracellular segment spans residues 563-566; that stretch reads GLRG. A helical transmembrane segment spans residues 567 to 587; the sequence is VLLHVAIIQAALPQGIVPFVF. Positions 582 and 583 each coordinate (indol-3-yl)acetate. The Cytoplasmic segment spans residues 588 to 601; the sequence is AKEYNVHPDILSTA. A helical transmembrane segment spans residues 602-622; the sequence is VIFGMLIALPITLLYYILLGL.

The protein belongs to the auxin efflux carrier (TC 2.A.69.1) family. In terms of assembly, homodimer. Interacts with TOPP4. Interacts with FYPP1 and FYPP3. Component of a complex made of PINs (e.g. PIN1 and PIN2), MAB4/MELs (e.g. NPY1/MAB4 and NPY5/MEL1) and AGC kinases (e.g. D6PK and PID) at the plasma membrane. Binds directly to NPY5/MEL1. Expressed at the basal side of elongated parenchymatous xylem cells.

The protein localises to the cell membrane. Auxin efflux carrier activity is competitively inhibited by naptalamate (N-1-naphthylphthalamic acid, NPA) but activated by D6PK-mediated phosphorylation. Acts as a component of the auxin efflux carrier; this activity is enhanced when activated by D6PK-mediated phosphorylation. Binds auxins including indole-3-acetic acid (IAA), indole-3-butyric acid (IBA), indole-3-propionic acid (IPA) and 4-chloroindole-3-acetic acid (4-Cl-IAA). Seems to be involved in the basipetal auxin transport. Mediates the formation of auxin gradient which is required to ensure correct organogenesis. Coordinated polar localization of PIN1 is directly regulated by the vesicle trafficking process and apical-basal PIN1 polarity also depends on the phosphorylation of conserved serine residues by PID kinase. The ARF-GEF protein GNOM is required for the correct recycling of PIN1 between the plasma membrane and endosomal compartments. Recrutes NPY proteins (e.g. NPY1/MAB4 and NPY5/MEL1) to the plasma membrane in a polar basal localization in root epidermis; this activity is optimized by AGC kinases-mediated (e.g. D6PK and PID) phosphorylation that limits their lateral diffusion-based escape. This is Auxin efflux carrier component 1 from Arabidopsis thaliana (Mouse-ear cress).